Reading from the N-terminus, the 202-residue chain is Small ribosomal subunit protein uS5 (202 aa).

In terms of domain architecture, S5 DRBM spans 50 to 113 (LKQELLNVNI…REAKLNLIPV (64 aa)).

Belongs to the universal ribosomal protein uS5 family. In terms of assembly, part of the 30S ribosomal subunit. Contacts protein S4.

In terms of biological role, with S4 and S12 plays an important role in translational accuracy. The protein is Small ribosomal subunit protein uS5 of Pyrobaculum arsenaticum (strain DSM 13514 / JCM 11321 / PZ6).